A 336-amino-acid polypeptide reads, in one-letter code: 3-isopropylmalate dehydrogenase (336 aa).

4 residues coordinate substrate: arginine 87, arginine 97, arginine 121, and aspartate 211. Aspartate 211, aspartate 235, and aspartate 239 together coordinate Mg(2+). 271–283 (GSAPDIAGQGIAD) contacts NAD(+).

This sequence belongs to the isocitrate and isopropylmalate dehydrogenases family. LeuB type 2 subfamily. As to quaternary structure, homodimer. Requires Mg(2+) as cofactor. The cofactor is Mn(2+).

Its subcellular location is the cytoplasm. The catalysed reaction is (2R,3S)-3-isopropylmalate + NAD(+) = 4-methyl-2-oxopentanoate + CO2 + NADH. It functions in the pathway amino-acid biosynthesis; L-leucine biosynthesis; L-leucine from 3-methyl-2-oxobutanoate: step 3/4. Functionally, catalyzes the oxidation of 3-carboxy-2-hydroxy-4-methylpentanoate (3-isopropylmalate) to 3-carboxy-4-methyl-2-oxopentanoate. The product decarboxylates to 4-methyl-2 oxopentanoate. The polypeptide is 3-isopropylmalate dehydrogenase (Mycolicibacterium paratuberculosis (strain ATCC BAA-968 / K-10) (Mycobacterium paratuberculosis)).